A 239-amino-acid polypeptide reads, in one-letter code: Sugar fermentation stimulation protein homolog (239 aa).

It belongs to the SfsA family.

In Caulobacter vibrioides (strain ATCC 19089 / CIP 103742 / CB 15) (Caulobacter crescentus), this protein is Sugar fermentation stimulation protein homolog.